Here is a 275-residue protein sequence, read N- to C-terminus: Two-component response regulator PprB (275 aa).

The Response regulatory domain occupies 10-128 (SVLIIDDEPQ…ELLHGLERLE (119 aa)). D60 carries the post-translational modification 4-aspartylphosphate. The interval 173-205 (SQPSALRSEDSQPSAPPAPVAESQVSPSNPLFG) is disordered. The 66-residue stretch at 200 to 265 (SNPLFGKLSP…QLALALSPAA (66 aa)) folds into the HTH luxR-type domain. The segment at residues 224–243 (NYQIAYELGITENTVKLYVS) is a DNA-binding region (H-T-H motif).

In terms of processing, phosphorylated by PprA.

In terms of biological role, member of the two-component regulatory system PprA/PprB involved in biofilm formation by controlling the expression of many related genes including type IVb pili major subunit flp pilin, adhesin bapA or cupE fimbriae. Functions as a transcription regulator by direct binding to promoter regions. Negatively regulates its own transcription. This chain is Two-component response regulator PprB, found in Pseudomonas aeruginosa (strain ATCC 15692 / DSM 22644 / CIP 104116 / JCM 14847 / LMG 12228 / 1C / PRS 101 / PAO1).